We begin with the raw amino-acid sequence, 401 residues long: Imidazolonepropionase (401 aa).

Fe(3+) contacts are provided by His66 and His68. Zn(2+)-binding residues include His66 and His68. 3 residues coordinate 4-imidazolone-5-propanoate: Arg75, Tyr138, and His171. Position 138 (Tyr138) interacts with N-formimidoyl-L-glutamate. His236 provides a ligand contact to Fe(3+). Position 236 (His236) interacts with Zn(2+). Gln239 serves as a coordination point for 4-imidazolone-5-propanoate. A Fe(3+)-binding site is contributed by Asp311. Zn(2+) is bound at residue Asp311. N-formimidoyl-L-glutamate-binding residues include Asn313 and Gly315. Thr316 provides a ligand contact to 4-imidazolone-5-propanoate.

Belongs to the metallo-dependent hydrolases superfamily. HutI family. It depends on Zn(2+) as a cofactor. Fe(3+) serves as cofactor.

The protein resides in the cytoplasm. The enzyme catalyses 4-imidazolone-5-propanoate + H2O = N-formimidoyl-L-glutamate. Its pathway is amino-acid degradation; L-histidine degradation into L-glutamate; N-formimidoyl-L-glutamate from L-histidine: step 3/3. Catalyzes the hydrolytic cleavage of the carbon-nitrogen bond in imidazolone-5-propanoate to yield N-formimidoyl-L-glutamate. It is the third step in the universal histidine degradation pathway. The chain is Imidazolonepropionase from Pseudomonas putida (strain ATCC 700007 / DSM 6899 / JCM 31910 / BCRC 17059 / LMG 24140 / F1).